The sequence spans 630 residues: PAN2-PAN3 deadenylation complex subunit PAN3 (630 aa).

The C3H1-type zinc finger occupies 7-36 (SAKDTLCKNILIYGYCKFENKGCAFSHHKP). 2 disordered regions span residues 38–72 (VGQPPVSASSSSGYSGNSSPAEAKRKFNLNTPSFQ) and 135–171 (GFGSEYPSSPNTSGAGQPPNPYLTGNGHPASMAQSSG). Residues 44 to 56 (SASSSSGYSGNSS) are compositionally biased toward low complexity. Residues 140 to 149 (YPSSPNTSGA) show a composition bias toward polar residues. The interval 231 to 501 (QTLPRSNLPE…LDRFSQRYLT (271 aa)) is pseudokinase domain. Residues Arg-283, 333–340 (DYFPNSST), and 388–389 (TK) each bind ATP. A coiled-coil region spans residues 502–540 (TRLFSTINNLEDSTDFMESQITTELENARLFRLLTKLNF). Residues 541–630 (IIDRPEAKDW…DSVFRNLTRD (90 aa)) form a knob domain region.

This sequence belongs to the protein kinase superfamily. PAN3 family. Homodimer. Forms a heterotrimer with a catalytic subunit PAN2 to form the poly(A)-nuclease (PAN) deadenylation complex. Interacts (via PAM-2 motif) with poly(A)-binding protein PAB1 (via PABC domain), conferring substrate specificity of the enzyme complex.

It is found in the cytoplasm. Regulatory subunit of the poly(A)-nuclease (PAN) deadenylation complex, one of two cytoplasmic mRNA deadenylases involved in mRNA turnover. PAN specifically shortens poly(A) tails of RNA and the activity is stimulated by poly(A)-binding protein PAB1. PAN deadenylation is followed by rapid degradation of the shortened mRNA tails by the CCR4-NOT complex. Deadenylated mRNAs are then degraded by two alternative mechanisms, namely exosome-mediated 3'-5' exonucleolytic degradation, or deadenylation-dependent mRNA decaping and subsequent 5'-3' exonucleolytic degradation by XRN1. May also be involved in post-transcriptional maturation of mRNA poly(A) tails. PAN3 acts as a positive regulator for PAN activity, recruiting the catalytic subunit PAN2 to mRNA via its interaction with RNA and with PAB1. In Scheffersomyces stipitis (strain ATCC 58785 / CBS 6054 / NBRC 10063 / NRRL Y-11545) (Yeast), this protein is PAN2-PAN3 deadenylation complex subunit PAN3.